The sequence spans 120 residues: Large ribosomal subunit protein uL18 (120 aa).

The protein belongs to the universal ribosomal protein uL18 family. In terms of assembly, part of the 50S ribosomal subunit; part of the 5S rRNA/L5/L18/L25 subcomplex. Contacts the 5S and 23S rRNAs.

This is one of the proteins that bind and probably mediate the attachment of the 5S RNA into the large ribosomal subunit, where it forms part of the central protuberance. The sequence is that of Large ribosomal subunit protein uL18 from Brucella anthropi (strain ATCC 49188 / DSM 6882 / CCUG 24695 / JCM 21032 / LMG 3331 / NBRC 15819 / NCTC 12168 / Alc 37) (Ochrobactrum anthropi).